Consider the following 386-residue polypeptide: uncharacterized protein (386 aa).

A run of 11 helical transmembrane segments spans residues 3–23 (WFSLFILSIAIGGSFALLVAI), 42–62 (LVGHVDSALIVGLYAFLIFLW), 72–92 (FASFLPALLGFFMIAGSSLFG), 102–122 (VPTIIHPVFFGGVSLFFLGVF), 145–165 (ILSTTVINSFLMPLTYLIAYF), 183–203 (FGGHTHQFVNAGLLISLWLLL), 212–232 (WFLNLLLVVFPITYFFAQIFL), 244–264 (TWGYMVGIGIPTIVYGLITLV), 276–296 (ILVLSVSLYLLGALMGYMIVG), 308–328 (VIASILVGVIALTFMYLQELG), and 333–353 (LGKFEKFIPFSTVLVCFFLSS).

It to R.prowazekii RP382.

Its subcellular location is the cell membrane. This is an uncharacterized protein from Aquifex aeolicus (strain VF5).